A 728-amino-acid chain; its full sequence is Homoaconitase, mitochondrial (728 aa).

Residues 1-24 (MVAIPRLARLSVPAWALSARGRFY) constitute a mitochondrion transit peptide. [4Fe-4S] cluster-binding residues include C362, C422, and C425.

Belongs to the aconitase/IPM isomerase family. The cofactor is [4Fe-4S] cluster.

The protein resides in the mitochondrion. It carries out the reaction (2R,3S)-homoisocitrate = cis-homoaconitate + H2O. It participates in amino-acid biosynthesis; L-lysine biosynthesis via AAA pathway; L-alpha-aminoadipate from 2-oxoglutarate: step 3/5. Catalyzes the reversible hydration of cis-homoaconitate to (2R,3S)-homoisocitrate, a step in the alpha-aminoadipate pathway for lysine biosynthesis. The chain is Homoaconitase, mitochondrial (LYS4) from Cryptococcus neoformans var. neoformans serotype D (strain B-3501A) (Filobasidiella neoformans).